The following is a 130-amino-acid chain: Methylglyoxal synthase (130 aa).

One can recognise an MGS-like domain in the interval 1-130; sequence MSTPRIALIA…DLARRLTANA (130 aa). Substrate-binding positions include histidine 11, lysine 15, 37–40, and 57–58; these read TGTT and SG. The Proton donor/acceptor role is filled by aspartate 63. Histidine 90 contributes to the substrate binding site.

This sequence belongs to the methylglyoxal synthase family.

The enzyme catalyses dihydroxyacetone phosphate = methylglyoxal + phosphate. Catalyzes the formation of methylglyoxal from dihydroxyacetone phosphate. This Burkholderia mallei (strain NCTC 10247) protein is Methylglyoxal synthase.